A 341-amino-acid chain; its full sequence is MKALSKLKPEEGIWMVDAPKPEVGHNDLLIKIRKTAICGTDVHIYNWDEWSQNTIPVPMVVGHEYVGEVVGMGQEVRGFTIGDRVSGEGHITCGHCRNCRGGRTHLCRNTSGVGVNREGAFAEYLVIPAFNAFKIPDDISDDLASIFDPFGNAVHTALSFDLVGEDVLITGAGPIGIMAAAVCRHVGARHVVITDVNEYRLELAEKMGATRAVNVAKENLEDVMQELGMTEGFDVGLEMSGVPSAFHSMLDTMNHGGKIAMLGIPGGDMAIDWSKVIFKGLIIKGIYGREMFETWYKMASLIQSGLDISPIITHHYSIDEFQQGFDAMRSGQSGKVILNWD.

C38 provides a ligand contact to Zn(2+). Active-site charge relay system residues include T40 and H43. Residues H63, E64, C93, C96, C99, and C107 each coordinate Zn(2+). Residues I175, D195, R200, 262–264, and 286–287 contribute to the NAD(+) site; these read LGI and IY.

Belongs to the zinc-containing alcohol dehydrogenase family. As to quaternary structure, homotetramer. Requires Zn(2+) as cofactor.

Its subcellular location is the cytoplasm. It catalyses the reaction L-threonine + NAD(+) = (2S)-2-amino-3-oxobutanoate + NADH + H(+). It functions in the pathway amino-acid degradation; L-threonine degradation via oxydo-reductase pathway; glycine from L-threonine: step 1/2. Its function is as follows. Catalyzes the NAD(+)-dependent oxidation of L-threonine to 2-amino-3-ketobutyrate. The polypeptide is L-threonine 3-dehydrogenase (Shewanella pealeana (strain ATCC 700345 / ANG-SQ1)).